We begin with the raw amino-acid sequence, 291 residues long: Tyrosine recombinase XerA (291 aa).

Residues 9-102 (PESGDLYNAF…AVRRFLKWIN (94 aa)) enclose the Core-binding (CB) domain. Residues 115 to 279 (KEVKALDEIQ…VLDDLRNEYL (165 aa)) form the Tyr recombinase domain. Catalysis depends on residues R150, K175, H231, R234, and H257. The active-site O-(3'-phospho-DNA)-tyrosine intermediate is the Y266.

This sequence belongs to the 'phage' integrase family. XerA subfamily.

The protein resides in the cytoplasm. Site-specific tyrosine recombinase, which acts by catalyzing the cutting and rejoining of the recombining DNA molecules. Probably involved in the resolution of chromosome dimers. Binds to the dif site. The sequence is that of Tyrosine recombinase XerA from Saccharolobus solfataricus (strain ATCC 35092 / DSM 1617 / JCM 11322 / P2) (Sulfolobus solfataricus).